An 87-amino-acid polypeptide reads, in one-letter code: UPF0250 protein ESA_02696 (87 aa).

It belongs to the UPF0250 family.

The polypeptide is UPF0250 protein ESA_02696 (Cronobacter sakazakii (strain ATCC BAA-894) (Enterobacter sakazakii)).